The chain runs to 474 residues: UDP-N-acetylmuramate--L-alanine ligase (474 aa).

122–128 (GTHGKTT) contacts ATP.

This sequence belongs to the MurCDEF family.

The protein localises to the cytoplasm. It carries out the reaction UDP-N-acetyl-alpha-D-muramate + L-alanine + ATP = UDP-N-acetyl-alpha-D-muramoyl-L-alanine + ADP + phosphate + H(+). It functions in the pathway cell wall biogenesis; peptidoglycan biosynthesis. Cell wall formation. This chain is UDP-N-acetylmuramate--L-alanine ligase, found in Saccharophagus degradans (strain 2-40 / ATCC 43961 / DSM 17024).